The primary structure comprises 1156 residues: Cartilage intermediate layer protein 2 (1156 aa).

The N-terminal stretch at 1–20 is a signal peptide; that stretch reads MASLLPLLCLCVVAAHLAGA. Positions 146 to 197 constitute a TSP type-1 domain; sequence EASWGAWGPWGPCSGSCGPGRRLRRRHCPSPAGDACPGRPLEAQKCVRPRCP. 3 cysteine pairs are disulfide-bonded: cysteine 158/cysteine 191, cysteine 162/cysteine 196, and cysteine 173/cysteine 181. N-linked (GlcNAc...) asparagine glycosylation is found at asparagine 276, asparagine 308, and asparagine 329. In terms of domain architecture, Ig-like C2-type spans 292-376; it reads PYLVKHPESR…AVRSGTARLT (85 aa). Residues cysteine 313 and cysteine 359 are joined by a disulfide bond. A disordered region spans residues 1134-1156; sequence SEAAQAQARASGPLRTRRGRVRQ.

In terms of processing, may be cleaved into 2 chains possibly by a furin-like protease upon or preceding secretion. In terms of tissue distribution, expressed in articular chondrocytes but not in knee meniscal cartilage cells. Localizes to the intermediate to deep zone of articular cartilage.

The protein resides in the secreted. The protein localises to the extracellular space. It is found in the extracellular matrix. May play a role in cartilage scaffolding. This Homo sapiens (Human) protein is Cartilage intermediate layer protein 2 (CILP2).